The sequence spans 585 residues: Voltage-gated potassium channel KCNC1 (585 aa).

The Cytoplasmic segment spans residues 1–190 (MGQGDESERI…EDPYSSRYAR (190 aa)). Serine 44 is subject to Phosphoserine. The Zn(2+) site is built by histidine 77, cysteine 83, cysteine 104, and cysteine 105. A disordered region spans residues 121 to 147 (SFGGAPLDNSADDADADGPGDSGDGED). 4 positions are modified to phosphoserine: serine 130, serine 142, serine 158, and serine 160. Residues 130-147 (SADDADADGPGDSGDGED) are compositionally biased toward acidic residues. The helical transmembrane segment at 191–209 (YVAFASLFFILVSITTFCL) threads the bilayer. Asparagine 220 and asparagine 229 each carry an N-linked (GlcNAc...) asparagine glycan. Residues 248 to 267 (IEGVCVVWFTFEFLMRVVFC) form a helical membrane-spanning segment. Topologically, residues 268–276 (PNKVEFIKN) are cytoplasmic. Residues 277–295 (SLNIIDFVAILPFYLEVGL) form a helical membrane-spanning segment. Residues 309–331 (FLRVVRFVRILRIFKLTRHFVGL) form a helical; Voltage-sensor membrane-spanning segment. Over 332–344 (RVLGHTLRASTNE) the chain is Cytoplasmic. Residues 345–366 (FLLLIIFLALGVLIFATMIYYA) form a helical membrane-spanning segment. Residues threonine 400, leucine 401, glycine 402, and tyrosine 403 each contribute to the K(+) site. The Selectivity filter signature appears at 400–405 (TLGYGD). Residues 415–436 (LVGALCALAGVLTIAMPVPVIV) traverse the membrane as a helical segment. The Cytoplasmic segment spans residues 437–585 (NNFGMYYSLA…YMPTEAVRVT (149 aa)). At serine 474 the chain carries Phosphoserine. The residue at position 483 (threonine 483) is a Phosphothreonine.

This sequence belongs to the potassium channel family. C (Shaw) (TC 1.A.1.2) subfamily. Kv3.1/KCNC1 sub-subfamily. Homotetramer. Homomultimer. Heteromultimer with KCNG3, KCNG4 and KCNV2. Heteromultimer with KCNC2. Heterotetramer with KCNC3. Interacts with the ancillary subunits KCNE1 and KCNE2; the interaction modulates channel activity. Post-translationally, N-glycosylated; contains sialylated glycans. In terms of tissue distribution, expressed in brain. Expressed in globus pallidal neurons of the basal ganglia (at protein level). Detected on Purkinje cells in the cerebellum molecular layer (at protein level).

It is found in the cell membrane. The protein resides in the cell projection. The protein localises to the axon. It localises to the presynaptic cell membrane. It carries out the reaction K(+)(in) = K(+)(out). Voltage-gated potassium channel that opens in response to the voltage difference across the membrane and through which potassium ions pass in accordance with their electrochemical gradient. The mechanism is time-dependent and inactivation is slow. Plays an important role in the rapid repolarization of fast-firing brain neurons. Can form functional homotetrameric channels and heterotetrameric channels that contain variable proportions of KCNC2, and possibly other family members as well. Contributes to fire sustained trains of very brief action potentials at high frequency in pallidal neurons. The chain is Voltage-gated potassium channel KCNC1 from Rattus norvegicus (Rat).